A 152-amino-acid chain; its full sequence is SsrA-binding protein (152 aa).

Belongs to the SmpB family.

It is found in the cytoplasm. Required for rescue of stalled ribosomes mediated by trans-translation. Binds to transfer-messenger RNA (tmRNA), required for stable association of tmRNA with ribosomes. tmRNA and SmpB together mimic tRNA shape, replacing the anticodon stem-loop with SmpB. tmRNA is encoded by the ssrA gene; the 2 termini fold to resemble tRNA(Ala) and it encodes a 'tag peptide', a short internal open reading frame. During trans-translation Ala-aminoacylated tmRNA acts like a tRNA, entering the A-site of stalled ribosomes, displacing the stalled mRNA. The ribosome then switches to translate the ORF on the tmRNA; the nascent peptide is terminated with the 'tag peptide' encoded by the tmRNA and targeted for degradation. The ribosome is freed to recommence translation, which seems to be the essential function of trans-translation. This chain is SsrA-binding protein, found in Rickettsia montanensis.